The following is a 577-amino-acid chain: Probable L-gulonolactone oxidase 4 (577 aa).

Residues 1-17 (MSFWLSLIFCFFTFASS) form the signal peptide. Residues 46 to 228 (SICKAAKVEY…SQVTFELQPM (183 aa)) enclose the FAD-binding PCMH-type domain.

It belongs to the oxygen-dependent FAD-linked oxidoreductase family. FAD is required as a cofactor.

It carries out the reaction L-gulono-1,4-lactone + O2 = L-ascorbate + H2O2 + H(+). The protein operates within cofactor biosynthesis; L-ascorbate biosynthesis. May be involved in the biosynthesis of ascorbic acid. The chain is Probable L-gulonolactone oxidase 4 from Arabidopsis thaliana (Mouse-ear cress).